Consider the following 574-residue polypeptide: Isocitrate dehydrogenase kinase/phosphatase (574 aa).

ATP contacts are provided by residues 315-321 and K336; that span reads APGIRGM. Residue D371 is part of the active site.

This sequence belongs to the AceK family.

Its subcellular location is the cytoplasm. The catalysed reaction is L-seryl-[isocitrate dehydrogenase] + ATP = O-phospho-L-seryl-[isocitrate dehydrogenase] + ADP + H(+). In terms of biological role, bifunctional enzyme which can phosphorylate or dephosphorylate isocitrate dehydrogenase (IDH) on a specific serine residue. This is a regulatory mechanism which enables bacteria to bypass the Krebs cycle via the glyoxylate shunt in response to the source of carbon. When bacteria are grown on glucose, IDH is fully active and unphosphorylated, but when grown on acetate or ethanol, the activity of IDH declines drastically concomitant with its phosphorylation. The protein is Isocitrate dehydrogenase kinase/phosphatase of Escherichia coli O127:H6 (strain E2348/69 / EPEC).